A 165-amino-acid polypeptide reads, in one-letter code: Transcription antitermination protein NusB (165 aa).

Residues methionine 1–glutamine 20 are disordered.

The protein belongs to the NusB family.

Involved in transcription antitermination. Required for transcription of ribosomal RNA (rRNA) genes. Binds specifically to the boxA antiterminator sequence of the ribosomal RNA (rrn) operons. In Agrobacterium fabrum (strain C58 / ATCC 33970) (Agrobacterium tumefaciens (strain C58)), this protein is Transcription antitermination protein NusB.